The following is a 582-amino-acid chain: Semenogelin-2 (582 aa).

The signal sequence occupies residues 1–23; it reads MKSIILFVLSLLLILEKQAAVMG. Disordered stretches follow at residues 26–65, 132–159, 272–295, 318–358, 379–417, and 439–582; these read CGSKGQLPSGSSQFPRGQKGQHYSGQKDEQHTKSKGSFSI, GGQAHRGTQNPSQDQGNSPSGKGISSQY, NLNQDQEHGQKTHKISYQSSRTEE, TEEK…ERHL, EEQIHGKSQNQVRIPSQAQEHGHKENKMSYQSSSTEERR, and EEQI…PVST. Composition is skewed to polar residues over residues 31–40 and 137–159; these read QLPSGSSQFP and RGTQNPSQDQGNSPSGKGISSQY. Positions 325–335 are enriched in polar residues; the sequence is KSQNQVTIHSQ. A compositionally biased stretch (basic and acidic residues) spans 336–345; that stretch reads GQEHGHKENK. Polar residues-rich tracts occupy residues 379 to 397, 439 to 457, 487 to 496, and 506 to 524; these read EEQIHGKSQNQVRIPSQAQ, KDVSQSSTSF, and SQIQTPNPNQDQWSVQNAK. Composition is skewed to basic and acidic residues over residues 525–552 and 559–582; these read GKSDQSAGREQDLLSHEQKGRHQQESSE and TEHEVAYDDHLTQQYNEDRNPVST.

The protein belongs to the semenogelin family. As to quaternary structure, interacts with SERPINA5.

It is found in the secreted. Functionally, participates in the formation of a gel matrix (sperm coagulum) entrapping the accessory gland secretions and ejaculated spermatozoa. In Hylobates lar (Lar gibbon), this protein is Semenogelin-2 (SEMG2).